The sequence spans 355 residues: MAEQMVFDADQVTAEVAEGIEKIQNASNLEELKAIKTTYAGADSAMTKASKAIGSLPADQKKEAGKLMGKLRADFGRAYGPKEVELKEAAEKAALAAETVDMTLPVNRKPLGARHPLPKLMEDVEDFFISMGWQISSGLEIEAEWYNFDSLNFGPDHPARQMQDTFYVKGNQAKDAAGFVGSNMVVRTQTSSDQVRALLTRGVPLYIASPGRVFRTDELDATHTPVFHQCEALAVDKHLTMADLKGVLDKLAVAMFGPEAKTRLRPSYFPFTEPSAELDLWFPDKKGGPGWLEWGGCGMVNPNVLKSAGIDPDVYTGFAFGVGMERTLLLRSDINDMHDLVEGDVRFAEQFVMGE.

Mg(2+) is bound at residue E273.

It belongs to the class-II aminoacyl-tRNA synthetase family. Phe-tRNA synthetase alpha subunit type 1 subfamily. In terms of assembly, tetramer of two alpha and two beta subunits. Requires Mg(2+) as cofactor.

The protein localises to the cytoplasm. It catalyses the reaction tRNA(Phe) + L-phenylalanine + ATP = L-phenylalanyl-tRNA(Phe) + AMP + diphosphate + H(+). The sequence is that of Phenylalanine--tRNA ligase alpha subunit from Bifidobacterium longum subsp. infantis (strain ATCC 15697 / DSM 20088 / JCM 1222 / NCTC 11817 / S12).